The sequence spans 450 residues: UDP-N-acetylmuramoylalanine--D-glutamate ligase (450 aa).

Position 119–125 (119–125 (GSNGKTT)) interacts with ATP.

Belongs to the MurCDEF family.

The protein localises to the cytoplasm. It catalyses the reaction UDP-N-acetyl-alpha-D-muramoyl-L-alanine + D-glutamate + ATP = UDP-N-acetyl-alpha-D-muramoyl-L-alanyl-D-glutamate + ADP + phosphate + H(+). It functions in the pathway cell wall biogenesis; peptidoglycan biosynthesis. Cell wall formation. Catalyzes the addition of glutamate to the nucleotide precursor UDP-N-acetylmuramoyl-L-alanine (UMA). This Streptococcus thermophilus (strain CNRZ 1066) protein is UDP-N-acetylmuramoylalanine--D-glutamate ligase.